The sequence spans 427 residues: Adenylosuccinate synthetase (427 aa).

GTP contacts are provided by residues 12–18 (GDEGKGK) and 40–42 (GHT). Aspartate 13 (proton acceptor) is an active-site residue. Positions 13 and 40 each coordinate Mg(2+). IMP-binding positions include 13-16 (DEGK), 38-41 (NAGH), threonine 128, arginine 142, glutamine 223, threonine 238, and arginine 302. Histidine 41 functions as the Proton donor in the catalytic mechanism. 298-304 (TTTGRPR) contributes to the substrate binding site. GTP contacts are provided by residues arginine 304, 330–332 (KLD), and 412–414 (SVG).

It belongs to the adenylosuccinate synthetase family. As to quaternary structure, homodimer. Requires Mg(2+) as cofactor.

The protein localises to the cytoplasm. The enzyme catalyses IMP + L-aspartate + GTP = N(6)-(1,2-dicarboxyethyl)-AMP + GDP + phosphate + 2 H(+). Its pathway is purine metabolism; AMP biosynthesis via de novo pathway; AMP from IMP: step 1/2. In terms of biological role, plays an important role in the de novo pathway of purine nucleotide biosynthesis. Catalyzes the first committed step in the biosynthesis of AMP from IMP. The chain is Adenylosuccinate synthetase from Carboxydothermus hydrogenoformans (strain ATCC BAA-161 / DSM 6008 / Z-2901).